The primary structure comprises 618 residues: Proline--tRNA ligase (618 aa).

This sequence belongs to the class-II aminoacyl-tRNA synthetase family. ProS type 1 subfamily. In terms of assembly, homodimer.

It localises to the cytoplasm. It catalyses the reaction tRNA(Pro) + L-proline + ATP = L-prolyl-tRNA(Pro) + AMP + diphosphate. Functionally, catalyzes the attachment of proline to tRNA(Pro) in a two-step reaction: proline is first activated by ATP to form Pro-AMP and then transferred to the acceptor end of tRNA(Pro). As ProRS can inadvertently accommodate and process non-cognate amino acids such as alanine and cysteine, to avoid such errors it has two additional distinct editing activities against alanine. One activity is designated as 'pretransfer' editing and involves the tRNA(Pro)-independent hydrolysis of activated Ala-AMP. The other activity is designated 'posttransfer' editing and involves deacylation of mischarged Ala-tRNA(Pro). The misacylated Cys-tRNA(Pro) is not edited by ProRS. This Streptococcus pyogenes serotype M18 (strain MGAS8232) protein is Proline--tRNA ligase.